Reading from the N-terminus, the 320-residue chain is MKFTLEDQVVLITGGSQGLGKEFAKKYYNEAENTKIIIVSRSEARLLDTCNEIRIEAHLRRETTDEGQVQHKLAAPLDLEQRLFYYPCDLSCYESVECLFNALRDLDLLPTQTLCCAGGAVPKLFRGLSGHELNLGMDINYKTTLNVAHQIALAEQTKEHHLIIFSSATALYPFVGYSQYAPAKAAIKSLVAILRQELTNFRISCVYPGNFESEGFTVEQLTKPEITKLIEGPSDAIPCKQACDIIAKSLARGDDDVFTDFVGWMIMGMDLGLTAKKSRFVPLQWIFGVLSNILVVPFYMVGCSWYIRKWFRENDGKKAN.

Topologically, residues 1–254 (MKFTLEDQVV…IIAKSLARGD (254 aa)) are cytoplasmic. L11 is an NADP(+) binding site. Residues G14, S16, and G18 each coordinate NADPH. The GXSXG signature appears at 14 to 18 (GGSQG). L19 provides a ligand contact to NADP(+). NADPH is bound by residues R41, R45, D89, and L90. D89 is a binding site for NADP(+). The active-site Proton donor is S166. NADP(+)-binding residues include Y180, K184, and S213. The active-site Proton acceptor is Y180. The Lowers pKa of active site Tyr role is filled by K184. The chain crosses the membrane as a helical span at residues 255 to 275 (DDVFTDFVGWMIMGMDLGLTA). Topologically, residues 276–279 (KKSR) are lumenal. A helical membrane pass occupies residues 280-300 (FVPLQWIFGVLSNILVVPFYM). At 301 to 320 (VGCSWYIRKWFRENDGKKAN) the chain is on the cytoplasmic side.

This sequence belongs to the short-chain dehydrogenases/reductases (SDR) family. As to quaternary structure, dimer or tetramer.

The protein resides in the endoplasmic reticulum membrane. The enzyme catalyses sphinganine + NADP(+) = 3-oxosphinganine + NADPH + H(+). Its pathway is lipid metabolism; sphingolipid metabolism. Its function is as follows. Catalyzes the reduction of 3'-oxosphinganine (3-ketodihydrosphingosine/KDS) to sphinganine (dihydrosphingosine/DHS), the second step of de novo sphingolipid biosynthesis. The chain is 3-ketodihydrosphingosine reductase TSC10 from Saccharomyces cerevisiae (strain ATCC 204508 / S288c) (Baker's yeast).